The following is a 196-amino-acid chain: Rho-related protein racL (196 aa).

10–17 (GDGAVGKT) is a GTP binding site. The short motif at 32-40 (YQPTVFDNF) is the Effector region element. GTP-binding positions include 57–61 (DTAGQ) and 116–119 (TQND). C193 carries the post-translational modification Cysteine methyl ester. Residue C193 is the site of S-geranylgeranyl cysteine attachment. The propeptide at 194–196 (IIL) is removed in mature form.

It belongs to the small GTPase superfamily. Rho family.

It is found in the cell membrane. The chain is Rho-related protein racL (racL) from Dictyostelium discoideum (Social amoeba).